The primary structure comprises 170 residues: Acetyl-CoA decarbonylase/synthase complex subunit epsilon 1 (170 aa).

It belongs to the CdhB family. In terms of assembly, heterotetramer of two alpha and two epsilon subunits. The ACDS complex is made up of alpha, epsilon, beta, gamma and delta subunits with a probable stoichiometry of (alpha(2)epsilon(2))(4)-beta(8)-(gamma(1)delta(1))(8).

Its pathway is one-carbon metabolism; methanogenesis from acetate. Part of a complex that catalyzes the reversible cleavage of acetyl-CoA, allowing growth on acetate as sole source of carbon and energy. The alpha-epsilon subcomponent functions as a carbon monoxide dehydrogenase. The precise role of the epsilon subunit is unclear; it may have a stabilizing role within the alpha(2)epsilon(2) component and/or be involved in electron transfer to FAD during a potential FAD-mediated CO oxidation. In Methanosarcina barkeri (strain Fusaro / DSM 804), this protein is Acetyl-CoA decarbonylase/synthase complex subunit epsilon 1.